Reading from the N-terminus, the 320-residue chain is Probable serine proteinase inhibitor 1 (320 aa).

The protein belongs to the serpin family. Poxviruses subfamily.

The protein is Probable serine proteinase inhibitor 1 (SPI-1) of Swinepox virus (strain Kasza) (SWPV).